Reading from the N-terminus, the 626-residue chain is Threonine--tRNA ligase (626 aa).

Residues 1–144 (MRMLLIHADY…LSRTIVPEEG (144 aa)) form an editing domain region. The interval 207–506 (PHVRLMLEHE…QAQGKKPMFP (300 aa)) is catalytic. Zn(2+)-binding residues include cysteine 299, histidine 351, and histidine 475.

Belongs to the class-II aminoacyl-tRNA synthetase family. In terms of assembly, homodimer. It depends on Zn(2+) as a cofactor.

It localises to the cytoplasm. It carries out the reaction tRNA(Thr) + L-threonine + ATP = L-threonyl-tRNA(Thr) + AMP + diphosphate + H(+). Its function is as follows. Catalyzes the attachment of threonine to tRNA(Thr) in a two-step reaction: L-threonine is first activated by ATP to form Thr-AMP and then transferred to the acceptor end of tRNA(Thr). Also edits incorrectly charged L-seryl-tRNA(Thr). The chain is Threonine--tRNA ligase from Thermococcus gammatolerans (strain DSM 15229 / JCM 11827 / EJ3).